The sequence spans 125 residues: Large ribosomal subunit protein bL17 (125 aa).

The protein belongs to the bacterial ribosomal protein bL17 family. In terms of assembly, part of the 50S ribosomal subunit. Contacts protein L32.

This is Large ribosomal subunit protein bL17 from Syntrophus aciditrophicus (strain SB).